The following is a 219-amino-acid chain: Transcriptional regulatory protein QseB (219 aa).

In terms of domain architecture, Response regulatory spans 2-116 (RILLVEDDTL…EVAARLEALV (115 aa)). Asp-51 carries the post-translational modification 4-aspartylphosphate. The ompR/PhoB-type DNA-binding region spans 124-218 (SSELRHGQVT…VHGIGYTLGD (95 aa)).

Phosphorylated by QseC.

It localises to the cytoplasm. Its function is as follows. Member of a two-component regulatory system QseB/QseC. Activates the flagella regulon by activating transcription of flhDC. The polypeptide is Transcriptional regulatory protein QseB (qseB) (Salmonella typhimurium (strain LT2 / SGSC1412 / ATCC 700720)).